Reading from the N-terminus, the 240-residue chain is Uridylate kinase (240 aa).

Position 12-15 (lysine 12–glycine 15) interacts with ATP. Positions glycine 20–glycine 25 are involved in allosteric activation by GTP. Glycine 54 provides a ligand contact to UMP. Residues glycine 55 and arginine 59 each coordinate ATP. UMP contacts are provided by residues aspartate 74 and threonine 135 to threonine 142. Residues asparagine 163, tyrosine 169, and aspartate 172 each contribute to the ATP site.

The protein belongs to the UMP kinase family. Homohexamer.

It localises to the cytoplasm. It carries out the reaction UMP + ATP = UDP + ADP. It functions in the pathway pyrimidine metabolism; CTP biosynthesis via de novo pathway; UDP from UMP (UMPK route): step 1/1. Its activity is regulated as follows. Allosterically activated by GTP. Inhibited by UTP. Its function is as follows. Catalyzes the reversible phosphorylation of UMP to UDP. The polypeptide is Uridylate kinase (Limosilactobacillus reuteri (Lactobacillus reuteri)).